Consider the following 1031-residue polypeptide: Toll-like receptor 9 (1031 aa).

The signal sequence occupies residues 1–25 (MGPCHGALQPLSLLVQAAMLAVALA). Residues 26–817 (QGTLPPFLPC…LCLDESLSWD (792 aa)) are Extracellular-facing. Cys-35 and Cys-45 are oxidised to a cystine. 47-51 (WLFLK) contributes to the DNA binding site. LRR repeat units follow at residues 62–85 (RDNV…DFAQ), 87–110 (SNLQ…HFPC), 122–147 (VPTL…SLVS), 150–166 (LSRT…LTGL), 167–190 (HALR…ALEV), 198–221 (LGNL…LPPS), 223–242 (EYLL…DLAN), 243–268 (LTAL…CVEC), 283–306 (LSRL…WFRG), 308–332 (GNLT…AFQG), 333–356 (LAQL…HLTL), 363–386 (LLSL…TLQP), 390–413 (LPML…IFKD), 414–438 (FPGL…ATTG), 470–494 (CKNL…MFAQ), 496–519 (SRLQ…QFVP), 520–543 (LTSL…SFTE), 545–567 (PRLE…VGHN), 574–598 (LPTL…LCST), 600–622 (LWAL…LYLR), 627–650 (LRSL…TLGN), 652–675 (PKSL…SLTL), 676–699 (LPNL…SLPS), 701–723 (TQLQ…FFAL), 724–747 (ATRL…WFGF), and 749–772 (AGSL…AFVD). A glycan (N-linked (GlcNAc...) asparagine) is linked at Asn-64. DNA-binding positions include 72–77 (SNRIHH) and 95–109 (KWNC…MHFP). Residues Cys-98 and Cys-110 are joined by a disulfide bond. N-linked (GlcNAc...) asparagine glycosylation occurs at Asn-129. DNA-binding positions include Tyr-132, Arg-152, and 179–181 (YYK). A disulfide bond links Cys-178 and Cys-184. An N-linked (GlcNAc...) asparagine glycan is attached at Asn-200. Tyr-208 lines the DNA pocket. N-linked (GlcNAc...) asparagine glycosylation is found at Asn-210 and Asn-242. 2 disulfide bridges follow: Cys-255–Cys-268 and Cys-258–Cys-265. A lipid anchor (S-palmitoyl cysteine) is attached at Cys-258. Arg-262 contacts DNA. Cys-265 carries S-palmitoyl cysteine lipidation. N-linked (GlcNAc...) asparagine glycans are attached at residues Asn-309 and Asn-340. Cys-470 and Cys-500 are disulfide-bonded. Asn-472 and Asn-513 each carry an N-linked (GlcNAc...) asparagine glycan. Asn-567 is a glycosylation site (N-linked (GlcNAc...) asparagine). N-linked (GlcNAc...) asparagine glycans are attached at residues Asn-669 and Asn-694. Asn-731 carries an N-linked (GlcNAc...) asparagine glycan. 2 cysteine pairs are disulfide-bonded: Cys-764-Cys-790 and Cys-766-Cys-809. A helical membrane pass occupies residues 818 to 838 (CFGLSLLVVALGLAMPMLHHL). At 839 to 1031 (CGWDLWYCFH…NFCRGPTMAE (193 aa)) the chain is on the cytoplasmic side. Residues 866–1011 (LSYDAFVVFD…SFWAQLGMAL (146 aa)) enclose the TIR domain.

Belongs to the Toll-like receptor family. Monomer and homodimer. Exists as a monomer in the absence of unmethylated cytidine-phosphate-guanosine (CpG) ligand. Proteolytic processing of an insertion loop (Z-loop) is required for homodimerization upon binding to the unmethylated CpG ligand leading to its activation. Interacts with MYD88 via their respective TIR domains. Interacts with BTK. Interacts (via transmembrane domain) with UNC93B1. Interacts with CD300LH; the interaction may promote full activation of TLR9-triggered innate responses. Interacts with CNPY3 and HSP90B1; this interaction is required for proper folding in the endoplasmic reticulum. Interacts with SMPDL3B. Interacts with CD82; this interaction is essential for TLR9-dependent myddosome formation in response to CpG stimulation. In terms of processing, activated by proteolytic cleavage of the flexible loop between repeats LRR14 and LRR15 within the ectodomain. Cleavage requires UNC93B1. Proteolytically processed by first removing the majority of the ectodomain by either asparagine endopeptidase (AEP) or a cathepsin followed by a trimming event that is solely cathepsin mediated and required for optimal receptor signaling. Palmitoylated by ZDHHC3 in the Golgi regulates TLR9 trafficking from the Golgi to endosomes. Depalmitoylation by PPT1 controls the release of TLR9 from UNC93B1 in endosomes. As to expression, expressed in airway epithelium, vascular endothelium and inflammatory cells in blood vessels of the lungs (at protein level). Highly expressed in pulmonary intravascular macrophages (PIMs) and to a lesser extent in alveolar macrophages, neutrophiles, type-II alveolar epithelial cells and bronchial epithelial cells of the lungs (at protein level). High constitutive intracellular expression in leukocytes including polymorphonuclear leukocytes (PMNs), CD4 and CD8 T cells (at protein level). Expressed throughout the respiratory tract including larynx, upper, middle and lower trachea, and bronchus in isolated equine respiratory epithelial cells (ERECs) and in fully differentiated ERECs cultured at the air-fluid interface (AFI) (at protein level). Constitutively expressed in peripheral blood mononuclear cells (PBMCs), lymph nodes and spleen. The level of expression in PBMCs is about 2- to 3-fold higher than that in lymph nodes and spleen. Very low expression in liver, heart, lung, kidney, small intestine, colon and stomach. Low expression in the airway tissue epithelium of the larynx, upper trachea, middle tranchea, lower trachea, bronchus and spleen, and more abundant expression in mesenteric lymph node. Not expressed in fully differentiated bronchus epithelial cells cultured at the AFI for four weeks. Expressed in gingival tissue.

Its subcellular location is the endoplasmic reticulum membrane. It localises to the endosome. It is found in the lysosome. The protein resides in the cytoplasmic vesicle. The protein localises to the phagosome. Its subcellular location is the cell membrane. It localises to the cytoplasm. It is found in the nucleus. Its function is as follows. Key component of innate and adaptive immunity. TLRs (Toll-like receptors) control host immune response against pathogens through recognition of molecular patterns specific to microorganisms. TLR9 is a nucleotide-sensing TLR which is activated by unmethylated cytidine-phosphate-guanosine (CpG) dinucleotides. Acts via MYD88 and TRAF6, leading to NF-kappa-B activation, cytokine secretion and the inflammatory response. Upon CpG stimulation, induces B-cell proliferation, activation, survival and antibody production. In Equus caballus (Horse), this protein is Toll-like receptor 9.